The primary structure comprises 760 residues: Translocation protein SEC63 homolog (760 aa).

Topologically, residues 1–14 (MAGQQFQYDDSGNT) are lumenal. The helical transmembrane segment at 15-35 (FFYFLTSFVGLIVIPATYYLW) threads the bilayer. At 36-69 (PRDQNAEQIRLKNIRKVYGRCMWYRLRLLKPQPN) the chain is on the cytoplasmic side. Residues 70–90 (IIPTVKKIVLLAGWALFLFLA) traverse the membrane as a helical segment. The Lumenal portion of the chain corresponds to 91–188 (YKVSKTDREY…LPAWIVDQKN (98 aa)). The region spanning 104–165 (NPYEVLNLDP…ESRKNWEEFG (62 aa)) is the J domain. A helical transmembrane segment spans residues 189–209 (SILVLLVYGLAFMVILPVVVG). The SEC63 1 domain occupies 197–541 (GLAFMVILPV…LKKKPTPVLL (345 aa)). Residues 210–760 (SWWYRSIRYS…EEEEEEEDDD (551 aa)) lie on the Cytoplasmic side of the membrane. The segment at 492-617 (AEEQPAEDGQ…DDEAEWQELQ (126 aa)) is disordered. Over residues 518–536 (KGPKKTAKSKKKKPLKKKP) the composition is skewed to basic residues. Thr-537 is subject to Phosphothreonine. Residues 582–608 (NRDSQSEKDDGSDRDSDREQDEKQNKD) show a composition bias toward basic and acidic residues. The stretch at 597-635 (SDREQDEKQNKDDEAEWQELQQSIQRKERALLETKSKIT) forms a coiled coil. One can recognise an SEC63 2 domain in the interval 637–714 (PVYSLYFPEE…GLDQIKPLKL (78 aa)). The tract at residues 720 to 760 (KPVPENHPQWDTAIEGDEDQEDSEGFEDSFEEEEEEEEDDD) is disordered. Residues 733–760 (IEGDEDQEDSEGFEDSFEEEEEEEEDDD) show a composition bias toward acidic residues. A phosphoserine mark is found at Ser-742 and Ser-748.

As to quaternary structure, the ER translocon complex consists of channel-forming core components SEC61A1, SEC61B and SEC61G and different auxiliary components such as SEC62 and SEC63. As to expression, widely expressed, with high levels in the liver.

Its subcellular location is the endoplasmic reticulum membrane. In terms of biological role, mediates cotranslational and post-translational transport of certain precursor polypeptides across endoplasmic reticulum (ER). Proposed to play an auxiliary role in recognition of precursors with short and apolar signal peptides. May cooperate with SEC62 and HSPA5/BiP to facilitate targeting of small presecretory proteins into the SEC61 channel-forming translocon complex, triggering channel opening for polypeptide translocation to the ER lumen. Required for efficient PKD1/Polycystin-1 biogenesis and trafficking to the plasma membrane of the primary cilia. This is Translocation protein SEC63 homolog from Homo sapiens (Human).